A 251-amino-acid chain; its full sequence is Probable transcriptional regulatory protein Franean1_5147 (251 aa).

Belongs to the TACO1 family.

It is found in the cytoplasm. The sequence is that of Probable transcriptional regulatory protein Franean1_5147 from Parafrankia sp. (strain EAN1pec).